The following is a 360-amino-acid chain: LETM1 domain-containing protein 1 (360 aa).

Residues 1 to 110 (MALSRVCWAR…KKARRIKTNM (110 aa)) form a required and sufficient for mitochondrial import region. Residues 1 to 137 (MALSRVCWAR…LRQFRQDVTK (137 aa)) are Cytoplasmic-facing. Residues 138–158 (CLFLGIISIPPFANYLVFLLM) traverse the membrane as a helical segment. The Mitochondrial intermembrane segment spans residues 159–360 (YLFPRQLLIR…LSTNYLGTRR (202 aa)). The Letm1 RBD domain occupies 186 to 360 (FRKQSHPEII…LSTNYLGTRR (175 aa)).

In terms of assembly, interacts with BRI3BP. Interacts (via C-terminal) with SMARCA4; the interaction regulates transcriptional expression of thermogenic genes in brown adipose tissue. In terms of tissue distribution, kidney, liver, skeletal muscle, heart and brain. Overexpressed in various tumors including leukemia, lymphoma, and carcinomas of the breast, kidney, ovary, stomach, colon and uterine cervix.

The protein localises to the mitochondrion outer membrane. It localises to the nucleus. It is found in the mitochondrion inner membrane. Functionally, plays an essential role for mitochondrial structure and function, as well as thermogenesis of brown adipocytes. In brown adipose tissue also localizes in the nucleus where it interacts with the chromatin remodeler SMARCA4 to regulate thermogenic genes expression, such as UCP1. May regulate phagocytosis and inflammatory responses to lipopolysaccharide in macrophages. Involved in tumorigenesis and may function as a negative regulator of the p53/TP53. The chain is LETM1 domain-containing protein 1 from Homo sapiens (Human).